Consider the following 324-residue polypeptide: tRNA pseudouridine synthase B (324 aa).

Asp49 (nucleophile) is an active-site residue. Residues Arg87–Glu107 form a disordered region.

It belongs to the pseudouridine synthase TruB family. Type 1 subfamily.

The catalysed reaction is uridine(55) in tRNA = pseudouridine(55) in tRNA. In terms of biological role, responsible for synthesis of pseudouridine from uracil-55 in the psi GC loop of transfer RNAs. This is tRNA pseudouridine synthase B from Brucella abortus (strain 2308).